We begin with the raw amino-acid sequence, 839 residues long: Probable alpha-glucuronidase A (839 aa).

An N-terminal signal peptide occupies residues 1–18 (MRWSFLTVLLWLVSLTGA). 12 N-linked (GlcNAc...) asparagine glycosylation sites follow: Asn-49, Asn-101, Asn-148, Asn-221, Asn-278, Asn-309, Asn-342, Asn-464, Asn-526, Asn-575, Asn-681, and Asn-731.

It belongs to the glycosyl hydrolase 67 family.

The protein localises to the secreted. The catalysed reaction is an alpha-D-glucuronoside + H2O = D-glucuronate + an alcohol. In terms of biological role, alpha-glucuronidase involved in the hydrolysis of xylan, a major structural heterogeneous polysaccharide found in plant biomass representing the second most abundant polysaccharide in the biosphere, after cellulose. Releases 4-O-methylglucuronic acid from xylan. This Aspergillus flavus (strain ATCC 200026 / FGSC A1120 / IAM 13836 / NRRL 3357 / JCM 12722 / SRRC 167) protein is Probable alpha-glucuronidase A (aguA).